A 204-amino-acid polypeptide reads, in one-letter code: High frequency lysogenization protein HflD homolog (204 aa).

The protein belongs to the HflD family.

It localises to the cytoplasm. The protein localises to the cell inner membrane. In Aeromonas hydrophila subsp. hydrophila (strain ATCC 7966 / DSM 30187 / BCRC 13018 / CCUG 14551 / JCM 1027 / KCTC 2358 / NCIMB 9240 / NCTC 8049), this protein is High frequency lysogenization protein HflD homolog.